The primary structure comprises 419 residues: Zinc finger CCCH domain-containing protein 62 (419 aa).

The segment at 89 to 116 (SLRKWVCKYWKDGKCKRGEQCQFLHSWS) adopts a C3H1-type zinc-finger fold. WD repeat units lie at residues 129-168 (GHNK…CVHS), 210-247 (GVVG…ESDP), 256-293 (GHSG…CIMT), 296-335 (QHTG…KVVQ), and 383-419 (FSTH…GNKV).

The sequence is that of Zinc finger CCCH domain-containing protein 62 (ZFWD4) from Arabidopsis thaliana (Mouse-ear cress).